A 274-amino-acid polypeptide reads, in one-letter code: Diaminopimelate epimerase (274 aa).

Residues asparagine 11, glutamine 44, and asparagine 64 each contribute to the substrate site. Catalysis depends on cysteine 73, which acts as the Proton donor. Residues 74–75 (GN), asparagine 157, asparagine 190, and 208–209 (ER) each bind substrate. The active-site Proton acceptor is the cysteine 217. 218 to 219 (GS) provides a ligand contact to substrate.

Belongs to the diaminopimelate epimerase family. In terms of assembly, homodimer.

The protein localises to the cytoplasm. It catalyses the reaction (2S,6S)-2,6-diaminopimelate = meso-2,6-diaminopimelate. It participates in amino-acid biosynthesis; L-lysine biosynthesis via DAP pathway; DL-2,6-diaminopimelate from LL-2,6-diaminopimelate: step 1/1. Functionally, catalyzes the stereoinversion of LL-2,6-diaminopimelate (L,L-DAP) to meso-diaminopimelate (meso-DAP), a precursor of L-lysine and an essential component of the bacterial peptidoglycan. This chain is Diaminopimelate epimerase, found in Glaesserella parasuis serovar 5 (strain SH0165) (Haemophilus parasuis).